The following is a 368-amino-acid chain: 3-dehydroquinate synthase (368 aa).

NAD(+) contacts are provided by residues 80 to 85 (DAESAK), 114 to 118 (GAATD), 138 to 139 (TT), K151, and K160. E193, H255, and H271 together coordinate Zn(2+).

The protein belongs to the sugar phosphate cyclases superfamily. Dehydroquinate synthase family. It depends on Co(2+) as a cofactor. Zn(2+) serves as cofactor. The cofactor is NAD(+).

The protein localises to the cytoplasm. It catalyses the reaction 7-phospho-2-dehydro-3-deoxy-D-arabino-heptonate = 3-dehydroquinate + phosphate. It participates in metabolic intermediate biosynthesis; chorismate biosynthesis; chorismate from D-erythrose 4-phosphate and phosphoenolpyruvate: step 2/7. Functionally, catalyzes the conversion of 3-deoxy-D-arabino-heptulosonate 7-phosphate (DAHP) to dehydroquinate (DHQ). This chain is 3-dehydroquinate synthase, found in Corynebacterium jeikeium (strain K411).